The primary structure comprises 682 residues: Transcription activator of gluconeogenesis PODANS_4_8760 (682 aa).

Residues 1–72 (MPEDGGPFGS…KDPLRPRRKK (72 aa)) form a disordered region. A compositionally biased stretch (low complexity) spans 9-21 (GSEAAEASGAMSE). Composition is skewed to basic and acidic residues over residues 29–41 (HEPH…DRMS) and 54–67 (GEVK…DPLR). The segment at residues 77 to 105 (CYACQRAHLTCGDERPCQRCIKRGLQDSC) is a DNA-binding region (zn(2)-C6 fungal-type). Disordered regions lie at residues 122–148 (EALR…RHHS), 181–211 (LTES…SGMV), 325–375 (PAGP…RPSK), 509–541 (NRNT…AASG), and 586–622 (TDKP…HSIL). 3 stretches are compositionally biased toward polar residues: residues 185–206 (LPFN…SNPP), 329–345 (TSLQ…QPTT), and 354–373 (PTMS…NSRP).

It belongs to the ERT1/acuK family.

It is found in the nucleus. Its function is as follows. Transcription factor which regulates nonfermentable carbon utilization. Activator of gluconeogenetic genes. The chain is Transcription activator of gluconeogenesis PODANS_4_8760 from Podospora anserina (strain S / ATCC MYA-4624 / DSM 980 / FGSC 10383) (Pleurage anserina).